A 94-amino-acid chain; its full sequence is Beta-diguetoxin-Dc1a (94 aa).

An N-terminal signal peptide occupies residues 1–17 (MKVFVVLLCLSLAAVYA). The propeptide occupies 18–38 (LEERLDKDADIMLDSPADMER). Intrachain disulfides connect C50-C63, C57-C77, C62-C91, and C79-C89.

It belongs to the neurotoxin 26 (DTX) family. Expressed by the venom gland.

The protein resides in the secreted. Its function is as follows. Insecticidal toxin. This toxin promotes opening of insect Nav channels. The toxin binds to the S1-S2 and S3-S4 loops in the domain II voltage-sensor of insect Nav channels (i.e., receptor site 4). The American cockroach P.americana is largely resistant to the effects of this toxin due to an unusual sequence within the domain II S1-S2 loop. In vivo, paralyzes lepidopteran and dipteran larvae. Paralyzed insects ultimately die from secondary effects of starvation and dehydration. This is Beta-diguetoxin-Dc1a from Diguetia canities (Desert bush spider).